We begin with the raw amino-acid sequence, 132 residues long: Binder of sperm protein homolog 1 (132 aa).

An N-terminal signal peptide occupies residues 1–17; the sequence is MGSLMLLFVETTRNSSA. Fibronectin type-II domains lie at 40-84 and 85-132; these read VTDG…FCSA and EDFA…KYCE. Disulfide bonds link Cys45-Cys69, Cys59-Cys82, Cys90-Cys116, and Cys104-Cys131. N-linked (GlcNAc...) asparagine glycosylation occurs at Asn53.

It belongs to the seminal plasma protein family. Expressed only in the epididymis.

The protein localises to the secreted. In terms of biological role, binds sperm in vitro and promotes sperm capacitation. Specifically promotes capacitation induced by high density lipoproteins (HDLs). Also binds heparin, phospholipid liposomes, and weakly to gelatin. Does not bind chondroitin sulfate B. This is Binder of sperm protein homolog 1 (BSPH1) from Homo sapiens (Human).